Reading from the N-terminus, the 748-residue chain is NAD(P)H-quinone oxidoreductase subunit 5, chloroplastic (748 aa).

16 helical membrane passes run 9–29, 40–60, 89–109, 121–140, 147–167, 185–205, 224–244, 258–278, 280–300, 327–347, 354–374, 396–416, 425–445, 551–571, 605–625, and 726–746; these read WIIP…LLLV, WAFP…DLSI, IDPL…MVLV, YLRF…GLVT, IYIF…FWFT, GDFG…SFEF, LFVT…SAQF, TPIS…FLVA, LFPL…IGII, LGYT…FHLI, ALLF…VGYS, TAFL…CFWS, WLYS…TAFY, LLPL…GIPF, FITN…IASL, and YLFL…FLFL.

The protein belongs to the complex I subunit 5 family. NDH is composed of at least 16 different subunits, 5 of which are encoded in the nucleus.

The protein resides in the plastid. It is found in the chloroplast thylakoid membrane. It catalyses the reaction a plastoquinone + NADH + (n+1) H(+)(in) = a plastoquinol + NAD(+) + n H(+)(out). It carries out the reaction a plastoquinone + NADPH + (n+1) H(+)(in) = a plastoquinol + NADP(+) + n H(+)(out). Functionally, NDH shuttles electrons from NAD(P)H:plastoquinone, via FMN and iron-sulfur (Fe-S) centers, to quinones in the photosynthetic chain and possibly in a chloroplast respiratory chain. The immediate electron acceptor for the enzyme in this species is believed to be plastoquinone. Couples the redox reaction to proton translocation, and thus conserves the redox energy in a proton gradient. This chain is NAD(P)H-quinone oxidoreductase subunit 5, chloroplastic (ndhF), found in Platanus occidentalis (Sycamore).